A 222-amino-acid polypeptide reads, in one-letter code: Deoxyribose-phosphate aldolase (222 aa).

The Proton donor/acceptor role is filled by Asp89. The active-site Schiff-base intermediate with acetaldehyde is Lys151. Lys180 functions as the Proton donor/acceptor in the catalytic mechanism.

It belongs to the DeoC/FbaB aldolase family. DeoC type 1 subfamily.

It localises to the cytoplasm. It catalyses the reaction 2-deoxy-D-ribose 5-phosphate = D-glyceraldehyde 3-phosphate + acetaldehyde. Its pathway is carbohydrate degradation; 2-deoxy-D-ribose 1-phosphate degradation; D-glyceraldehyde 3-phosphate and acetaldehyde from 2-deoxy-alpha-D-ribose 1-phosphate: step 2/2. Its function is as follows. Catalyzes a reversible aldol reaction between acetaldehyde and D-glyceraldehyde 3-phosphate to generate 2-deoxy-D-ribose 5-phosphate. The polypeptide is Deoxyribose-phosphate aldolase (Acholeplasma laidlawii (strain PG-8A)).